The sequence spans 205 residues: Holliday junction branch migration complex subunit RuvA (205 aa).

Residues 1 to 64 form a domain I region; it reads MIGKLKGVVD…EDMIRLYGFR (64 aa). The interval 65–143 is domain II; sequence SDAEREWFRL…AFAPVDPALI (79 aa). Residues 144-152 are flexible linker; sequence RLAGAVEER. The interval 153 to 205 is domain III; it reads TAPQPVADAISALVNLGYPQIQASAAVAAALQGAGEGAEAKTLIRLGLRELAR.

Belongs to the RuvA family. Homotetramer. Forms an RuvA(8)-RuvB(12)-Holliday junction (HJ) complex. HJ DNA is sandwiched between 2 RuvA tetramers; dsDNA enters through RuvA and exits via RuvB. An RuvB hexamer assembles on each DNA strand where it exits the tetramer. Each RuvB hexamer is contacted by two RuvA subunits (via domain III) on 2 adjacent RuvB subunits; this complex drives branch migration. In the full resolvosome a probable DNA-RuvA(4)-RuvB(12)-RuvC(2) complex forms which resolves the HJ.

Its subcellular location is the cytoplasm. The RuvA-RuvB-RuvC complex processes Holliday junction (HJ) DNA during genetic recombination and DNA repair, while the RuvA-RuvB complex plays an important role in the rescue of blocked DNA replication forks via replication fork reversal (RFR). RuvA specifically binds to HJ cruciform DNA, conferring on it an open structure. The RuvB hexamer acts as an ATP-dependent pump, pulling dsDNA into and through the RuvAB complex. HJ branch migration allows RuvC to scan DNA until it finds its consensus sequence, where it cleaves and resolves the cruciform DNA. This Methylobacterium nodulans (strain LMG 21967 / CNCM I-2342 / ORS 2060) protein is Holliday junction branch migration complex subunit RuvA.